Here is a 306-residue protein sequence, read N- to C-terminus: Manganese transport system membrane protein MntB (306 aa).

At 1-25 the chain is on the periplasmic side; it reads MNQLVVAFPFWHWLVEPLQYEFLIR. The helical transmembrane segment at 26–46 threads the bilayer; the sequence is AIWVSAFVGLVCAVLSCYITL. Residues 47-48 are Cytoplasmic-facing; that stretch reads KG. A helical membrane pass occupies residues 49 to 69; the sequence is WSLMGDAISHAVVPGVVLAYA. Residues 70–71 are Periplasmic-facing; it reads LN. The helical transmembrane segment at 72–92 threads the bilayer; the sequence is IPFAIGAFTFGFGATVAIGYV. Over 93–101 the chain is Cytoplasmic; sequence KSKTRLKED. Residues 102-122 form a helical membrane-spanning segment; that stretch reads AVIGIVFTGFFALGLVLVTKI. Over 123 to 141 the chain is Periplasmic; sequence PSNVDLFHILFGNVLGISQ. The helical transmembrane segment at 142–162 threads the bilayer; it reads QDIIQTLIAGSITLIVILLRR. Residues 163-179 are Cytoplasmic-facing; it reads KDLLLFCFDPNHAKAIG. The helical transmembrane segment at 180–200 threads the bilayer; it reads LRTQVMYYTLLSVLALTIVAA. Residues 201–202 lie on the Periplasmic side of the membrane; that stretch reads LQ. The chain crosses the membrane as a helical span at residues 203-223; that stretch reads TAGIILVISMLVTPGSIGYLL. Residues 224 to 228 are Cytoplasmic-facing; the sequence is SDRFD. A helical transmembrane segment spans residues 229 to 249; the sequence is HMLWYSVVSSVLSCVLGTYLS. Topologically, residues 250–255 are periplasmic; sequence YHFDVS. The chain crosses the membrane as a helical span at residues 256 to 276; that stretch reads TGGMIVVILTTLFVIAMIGAP. The Cytoplasmic portion of the chain corresponds to 277–306; the sequence is KYGILAQEWRKRSGPNPEDDENQTVVVDQV.

Belongs to the ABC-3 integral membrane protein family.

It localises to the cell membrane. Part of an ATP-driven transport system for manganese. In Synechocystis sp. (strain ATCC 27184 / PCC 6803 / Kazusa), this protein is Manganese transport system membrane protein MntB (mntB).